The sequence spans 367 residues: 3-isopropylmalate dehydrogenase (367 aa).

An NAD(+)-binding site is contributed by 80-93 (GKEWTHLPADEQPE). Substrate contacts are provided by R101, R111, R140, and D230. Mg(2+) contacts are provided by D230, D254, and D258. 288–300 (GSAPDLKGKNIAN) is an NAD(+) binding site.

The protein belongs to the isocitrate and isopropylmalate dehydrogenases family. LeuB type 1 subfamily. As to quaternary structure, homodimer. Mg(2+) is required as a cofactor. It depends on Mn(2+) as a cofactor.

The protein resides in the cytoplasm. The enzyme catalyses (2R,3S)-3-isopropylmalate + NAD(+) = 4-methyl-2-oxopentanoate + CO2 + NADH. Its pathway is amino-acid biosynthesis; L-leucine biosynthesis; L-leucine from 3-methyl-2-oxobutanoate: step 3/4. Functionally, catalyzes the oxidation of 3-carboxy-2-hydroxy-4-methylpentanoate (3-isopropylmalate) to 3-carboxy-4-methyl-2-oxopentanoate. The product decarboxylates to 4-methyl-2 oxopentanoate. The protein is 3-isopropylmalate dehydrogenase (leuB) of Buchnera aphidicola subsp. Cinara cedri (strain Cc).